Consider the following 724-residue polypeptide: Protein Aster-A (724 aa).

Low complexity predominate over residues 1-18 (MFDTTPHSGRSTPSSSPS). Residues 1 to 66 (MFDTTPHSGR…TPSTQSLGSR (66 aa)) form a disordered region. The span at 57–66 (TPSTQSLGSR) shows a compositional bias: polar residues. The region spanning 91–158 (EDFRKLFSKL…KEVTCLKKEK (68 aa)) is the GRAM domain. Residues 256 to 336 (SSGAADRSQE…GPTTLGPLDL (81 aa)) form a disordered region. Phosphoserine is present on residues Ser263, Ser267, and Ser271. Residues 300–312 (DSQPDASSSQTVT) show a composition bias toward polar residues. Low complexity predominate over residues 326-336 (DGPTTLGPLDL). The region spanning 367–538 (SGRLLINSVF…ELAKAEKLSL (172 aa)) is the VASt domain. A Phosphoserine modification is found at Ser415. The disordered stretch occupies residues 560–579 (SWRAHGDGPQHPDPDPCARA). Basic and acidic residues predominate over residues 563–575 (AHGDGPQHPDPDP). The chain crosses the membrane as a helical span at residues 610-630 (LISIVICVSLIILIALNVLLF).

As to expression, expressed in liver.

It is found in the endoplasmic reticulum membrane. The protein resides in the cell membrane. Its subcellular location is the cytoplasmic vesicle. The protein localises to the autophagosome. Functionally, cholesterol transporter that mediates non-vesicular transport of cholesterol from the plasma membrane (PM) to the endoplasmic reticulum (ER). Contains unique domains for binding cholesterol and the PM, thereby serving as a molecular bridge for the transfer of cholesterol from the PM to the ER. Plays a crucial role in cholesterol homeostasis and has the unique ability to localize to the PM based on the level of membrane cholesterol. In lipid-poor conditions localizes to the ER membrane and in response to excess cholesterol in the PM is recruited to the endoplasmic reticulum-plasma membrane contact sites (EPCS) which is mediated by the GRAM domain. At the EPCS, the sterol-binding VASt/ASTER domain binds to the cholesterol in the PM and facilitates its transfer from the PM to ER. May play a role in tumor progression. Plays a role in autophagy regulation and is required for biogenesis of the autophagosome. This function in autophagy requires its cholesterol-transfer activity. This is Protein Aster-A from Homo sapiens (Human).